A 285-amino-acid polypeptide reads, in one-letter code: 4-diphosphocytidyl-2-C-methyl-D-erythritol kinase (285 aa).

K12 is an active-site residue. ATP is bound at residue 95 to 105 (PVGAGLAGGST). The active site involves D137.

Belongs to the GHMP kinase family. IspE subfamily.

The catalysed reaction is 4-CDP-2-C-methyl-D-erythritol + ATP = 4-CDP-2-C-methyl-D-erythritol 2-phosphate + ADP + H(+). It functions in the pathway isoprenoid biosynthesis; isopentenyl diphosphate biosynthesis via DXP pathway; isopentenyl diphosphate from 1-deoxy-D-xylulose 5-phosphate: step 3/6. In terms of biological role, catalyzes the phosphorylation of the position 2 hydroxy group of 4-diphosphocytidyl-2C-methyl-D-erythritol. The polypeptide is 4-diphosphocytidyl-2-C-methyl-D-erythritol kinase (Syntrophomonas wolfei subsp. wolfei (strain DSM 2245B / Goettingen)).